Consider the following 141-residue polypeptide: Large-conductance mechanosensitive channel (141 aa).

Helical transmembrane passes span 21–41 and 85–105; these read VGVI…GDLI and GSFL…FMMV.

This sequence belongs to the MscL family. Homopentamer.

It is found in the cell inner membrane. Channel that opens in response to stretch forces in the membrane lipid bilayer. May participate in the regulation of osmotic pressure changes within the cell. In Dechloromonas aromatica (strain RCB), this protein is Large-conductance mechanosensitive channel.